We begin with the raw amino-acid sequence, 171 residues long: 3-hydroxydecanoyl-[acyl-carrier-protein] dehydratase (171 aa).

H70 is a catalytic residue.

Belongs to the thioester dehydratase family. FabA subfamily. In terms of assembly, homodimer.

It is found in the cytoplasm. The catalysed reaction is a (3R)-hydroxyacyl-[ACP] = a (2E)-enoyl-[ACP] + H2O. It carries out the reaction (3R)-hydroxydecanoyl-[ACP] = (2E)-decenoyl-[ACP] + H2O. The enzyme catalyses (2E)-decenoyl-[ACP] = (3Z)-decenoyl-[ACP]. The protein operates within lipid metabolism; fatty acid biosynthesis. Its function is as follows. Necessary for the introduction of cis unsaturation into fatty acids. Catalyzes the dehydration of (3R)-3-hydroxydecanoyl-ACP to E-(2)-decenoyl-ACP and then its isomerization to Z-(3)-decenoyl-ACP. Can catalyze the dehydratase reaction for beta-hydroxyacyl-ACPs with saturated chain lengths up to 16:0, being most active on intermediate chain length. This chain is 3-hydroxydecanoyl-[acyl-carrier-protein] dehydratase, found in Methylobacillus flagellatus (strain ATCC 51484 / DSM 6875 / VKM B-1610 / KT).